The following is a 357-amino-acid chain: CD4+ T-cell-stimulating antigen (357 aa).

An N-terminal signal peptide occupies residues 1-22 (MKKRTFALALSMIIASGVVLGA). C23 carries the N-palmitoyl cysteine lipid modification. C23 is lipidated: S-diacylglycerol cysteine.

The protein belongs to the BMP lipoprotein family.

Its subcellular location is the cell membrane. This Listeria innocua serovar 6a (strain ATCC BAA-680 / CLIP 11262) protein is CD4+ T-cell-stimulating antigen (tcsA).